We begin with the raw amino-acid sequence, 90 residues long: UPF0367 protein SYNPCC7002_A0153 (90 aa).

The protein belongs to the UPF0367 family.

The polypeptide is UPF0367 protein SYNPCC7002_A0153 (Picosynechococcus sp. (strain ATCC 27264 / PCC 7002 / PR-6) (Agmenellum quadruplicatum)).